A 525-amino-acid polypeptide reads, in one-letter code: Peptide chain release factor 3 (525 aa).

The tr-type G domain maps to 9–276 (AKRRTFAIIS…GFTRYAPAPQ (268 aa)). GTP is bound by residues 18–25 (SHPDAGKT), 86–90 (DTPGH), and 140–143 (NKFD).

This sequence belongs to the TRAFAC class translation factor GTPase superfamily. Classic translation factor GTPase family. PrfC subfamily.

The protein localises to the cytoplasm. Increases the formation of ribosomal termination complexes and stimulates activities of RF-1 and RF-2. It binds guanine nucleotides and has strong preference for UGA stop codons. It may interact directly with the ribosome. The stimulation of RF-1 and RF-2 is significantly reduced by GTP and GDP, but not by GMP. The chain is Peptide chain release factor 3 from Francisella tularensis subsp. novicida (strain U112).